We begin with the raw amino-acid sequence, 180 residues long: Crossover junction endodeoxyribonuclease RuvC (180 aa).

Catalysis depends on residues D7, E66, and D138. Residues D7, E66, and D138 each contribute to the Mg(2+) site.

This sequence belongs to the RuvC family. Homodimer which binds Holliday junction (HJ) DNA. The HJ becomes 2-fold symmetrical on binding to RuvC with unstacked arms; it has a different conformation from HJ DNA in complex with RuvA. In the full resolvosome a probable DNA-RuvA(4)-RuvB(12)-RuvC(2) complex forms which resolves the HJ. Requires Mg(2+) as cofactor.

The protein localises to the cytoplasm. The enzyme catalyses Endonucleolytic cleavage at a junction such as a reciprocal single-stranded crossover between two homologous DNA duplexes (Holliday junction).. The RuvA-RuvB-RuvC complex processes Holliday junction (HJ) DNA during genetic recombination and DNA repair. Endonuclease that resolves HJ intermediates. Cleaves cruciform DNA by making single-stranded nicks across the HJ at symmetrical positions within the homologous arms, yielding a 5'-phosphate and a 3'-hydroxyl group; requires a central core of homology in the junction. The consensus cleavage sequence is 5'-(A/T)TT(C/G)-3'. Cleavage occurs on the 3'-side of the TT dinucleotide at the point of strand exchange. HJ branch migration catalyzed by RuvA-RuvB allows RuvC to scan DNA until it finds its consensus sequence, where it cleaves and resolves the cruciform DNA. The sequence is that of Crossover junction endodeoxyribonuclease RuvC from Burkholderia orbicola (strain MC0-3).